The chain runs to 470 residues: Uronate isomerase (470 aa).

It belongs to the metallo-dependent hydrolases superfamily. Uronate isomerase family.

The catalysed reaction is D-glucuronate = D-fructuronate. The enzyme catalyses aldehydo-D-galacturonate = keto-D-tagaturonate. It participates in carbohydrate metabolism; pentose and glucuronate interconversion. In Salmonella typhi, this protein is Uronate isomerase.